The sequence spans 126 residues: Glycine cleavage system H protein (126 aa).

The Lipoyl-binding domain occupies 20–102 (IGTIGITDYA…LGDGWFFKVR (83 aa)). At K61 the chain carries N6-lipoyllysine.

Belongs to the GcvH family. The glycine cleavage system is composed of four proteins: P, T, L and H. (R)-lipoate is required as a cofactor.

Its function is as follows. The glycine cleavage system catalyzes the degradation of glycine. The H protein shuttles the methylamine group of glycine from the P protein to the T protein. The polypeptide is Glycine cleavage system H protein (Rhodospirillum rubrum (strain ATCC 11170 / ATH 1.1.1 / DSM 467 / LMG 4362 / NCIMB 8255 / S1)).